Here is a 226-residue protein sequence, read N- to C-terminus: Cytidylate kinase (226 aa).

Position 10 to 18 (G10 to T18) interacts with ATP.

This sequence belongs to the cytidylate kinase family. Type 1 subfamily.

Its subcellular location is the cytoplasm. It carries out the reaction CMP + ATP = CDP + ADP. It catalyses the reaction dCMP + ATP = dCDP + ADP. In Caldicellulosiruptor bescii (strain ATCC BAA-1888 / DSM 6725 / KCTC 15123 / Z-1320) (Anaerocellum thermophilum), this protein is Cytidylate kinase.